We begin with the raw amino-acid sequence, 420 residues long: Tyrosine--tRNA ligase (420 aa).

Position 36 (Tyr36) interacts with L-tyrosine. The short motif at 41 to 50 (PTADSLHIGH) is the 'HIGH' region element. L-tyrosine-binding residues include Tyr170 and Gln174. A 'KMSKS' region motif is present at residues 231–235 (KFGKS). Lys234 provides a ligand contact to ATP. The region spanning 353-420 (TNIVEVLIET…KKKYFMVNYQ (68 aa)) is the S4 RNA-binding domain.

The protein belongs to the class-I aminoacyl-tRNA synthetase family. TyrS type 1 subfamily. As to quaternary structure, homodimer.

Its subcellular location is the cytoplasm. It catalyses the reaction tRNA(Tyr) + L-tyrosine + ATP = L-tyrosyl-tRNA(Tyr) + AMP + diphosphate + H(+). In terms of biological role, catalyzes the attachment of tyrosine to tRNA(Tyr) in a two-step reaction: tyrosine is first activated by ATP to form Tyr-AMP and then transferred to the acceptor end of tRNA(Tyr). In Staphylococcus aureus (strain bovine RF122 / ET3-1), this protein is Tyrosine--tRNA ligase.